A 316-amino-acid polypeptide reads, in one-letter code: Glycine--tRNA ligase alpha subunit (316 aa).

It belongs to the class-II aminoacyl-tRNA synthetase family. As to quaternary structure, tetramer of two alpha and two beta subunits.

It is found in the cytoplasm. It catalyses the reaction tRNA(Gly) + glycine + ATP = glycyl-tRNA(Gly) + AMP + diphosphate. This is Glycine--tRNA ligase alpha subunit from Cupriavidus taiwanensis (strain DSM 17343 / BCRC 17206 / CCUG 44338 / CIP 107171 / LMG 19424 / R1) (Ralstonia taiwanensis (strain LMG 19424)).